The primary structure comprises 186 residues: MGLLTILRQQKLKEREVRVLLLGLDNAGKTTILKCLLNEDVNEVSPTFGFQIRTLEVEGLRFTIWDIGGQKTLRNFWKNYFESTEAIIWVVDSLDDLRLEECRNTLQELLVEEKLLFTSILVLANKSDVSGALSSEEISKILNISKYKSSHWRIFSVSALTGLNIKDAISWLANDLKEIKLGTIDY.

G2 carries N-myristoyl glycine lipidation. GTP-binding positions include 23-30, 66-70, and 125-128; these read GLDNAGKT, DIGGQ, and NKSD.

The protein belongs to the small GTPase superfamily. Arf family.

It is found in the cytoplasm. It localises to the cytoskeleton. In terms of biological role, has a role in the cofactor-dependent pathway of microtubule biogenesis. Required for growth polarity control. The polypeptide is ADP-ribosylation factor-like protein alp41 (alp41) (Schizosaccharomyces pombe (strain 972 / ATCC 24843) (Fission yeast)).